The primary structure comprises 430 residues: Immunoglobulin heavy constant delta (430 aa).

Topologically, residues 1–406 are extracellular; that stretch reads APTKAPDVFP…FDDVGSLWTT (406 aa). Positions 6–98 constitute an Ig-like 1 domain; sequence PDVFPIISGC…TASKSKKEIF (93 aa). Cys-28 and Cys-84 are disulfide-bonded. Residues 96-167 form a disordered region; the sequence is EIFRWPESPK…TPECPSHTQP (72 aa). Residues 106-118 are compositionally biased toward polar residues; that stretch reads AQASSVPTAQPQA. 2 O-linked (GalNAc...) serine glycosylation sites follow: Ser-109 and Ser-110. O-linked (GalNAc...) threonine glycans are attached at residues Thr-113, Thr-126, Thr-127, Thr-131, and Thr-132. Residues 138–158 are compositionally biased toward basic and acidic residues; it reads GGEEKKKEKEKEEQEERETKT. 2 consecutive Ig-like domains span residues 175–263 and 267–373; these read PAVQ…RLMA and PAAQ…RSLE. Intrachain disulfides connect Cys-190-Cys-249 and Cys-294-Cys-355. Asn-225, Asn-316, and Asn-367 each carry an N-linked (GlcNAc...) asparagine glycan. The helical transmembrane segment at 407-427 threads the bilayer; sequence LSTFVALFILTLLYSGIVTFI. The Cytoplasmic portion of the chain corresponds to 428–430; it reads KVK.

As to quaternary structure, immunoglobulins are composed of two identical heavy chains and two identical light chains; disulfide-linked. An IgD molecule contains thus a delta heavy chain combined with either a kappa or a lambda light chains. Kappa light chains are found predominantly on the membrane IgD (mIgD) form and lambda on the secreted IgD (sIgD) form, this fact is poorly understood. Membrane-bound IgD molecules are non-covalently associated with a heterodimer of CD79A and CD79B.

The protein localises to the secreted. It is found in the cell membrane. Constant region of immunoglobulin heavy chains. Immunoglobulins, also known as antibodies, are membrane-bound or secreted glycoproteins produced by B lymphocytes. In the recognition phase of humoral immunity, the membrane-bound immunoglobulins serve as receptors which, upon binding of a specific antigen, trigger the clonal expansion and differentiation of B lymphocytes into immunoglobulins-secreting plasma cells. Secreted immunoglobulins mediate the effector phase of humoral immunity, which results in the elimination of bound antigens. The antigen binding site is formed by the variable domain of one heavy chain, together with that of its associated light chain. Thus, each immunoglobulin has two antigen binding sites with remarkable affinity for a particular antigen. The variable domains are assembled by a process called V-(D)-J rearrangement and can then be subjected to somatic hypermutations which, after exposure to antigen and selection, allow affinity maturation for a particular antigen. IgD is the major antigen receptor isotype on the surface of most peripheral B-cells, where it is coexpressed with IgM. The membrane-bound IgD (mIgD) induces the phosphorylation of CD79A and CD79B by the Src family of protein tyrosine kinases. Soluble IgD (sIgD) concentration in serum below those of IgG, IgA, and IgM but much higher than that of IgE. IgM and IgD molecules present on B cells have identical V regions and antigen-binding sites. After the antigen binds to the B-cell receptor, the secreted form sIgD is shut off. IgD is a potent inducer of TNF, IL1B, and IL1RN. IgD also induces release of IL6, IL10, and LIF from peripheral blood mononuclear cells. Monocytes seem to be the main producers of cytokines in vitro in the presence of IgD. The sequence is that of Immunoglobulin heavy constant delta from Homo sapiens (Human).